The following is a 207-amino-acid chain: MKMFIVLVLSAAFALPAAFATEQDVITLQAYEELLKNGAANGMTKTVISSPVLEEALVSYSKNKLGGLPVCGETCVGGTCNTPGCSCSWPVCTRNSLESTKSANPLLEEALTAFAKKGLGGLPVCGETCVGGTCNTPGCTCSWPVCTRNALETQKPNHLLEEALVAFAKKGNLGGLPVCGETCVGGTCNTPGCSCSWPVCTRNALAM.

The first 20 residues, 1–20, serve as a signal peptide directing secretion; that stretch reads MKMFIVLVLSAAFALPAAFA. The propeptide occupies 21-66; sequence TEQDVITLQAYEELLKNGAANGMTKTVISSPVLEEALVSYSKNKLG. A cross-link (cyclopeptide (Gly-Asn)) is located at residues 67–95; it reads GLPVCGETCVGGTCNTPGCSCSWPVCTRN. 3 cysteine pairs are disulfide-bonded: Cys71–Cys85, Cys75–Cys87, and Cys80–Cys92. The propeptide occupies 96 to 120; sequence SLESTKSANPLLEEALTAFAKKGLG. Positions 121–149 form a cross-link, cyclopeptide (Gly-Asn); sequence GLPVCGETCVGGTCNTPGCTCSWPVCTRN. Cystine bridges form between Cys125–Cys139, Cys129–Cys141, and Cys134–Cys146. The propeptide occupies 150-174; that stretch reads ALETQKPNHLLEEALVAFAKKGNLG. The segment at residues 175–203 is a cross-link (cyclopeptide (Gly-Asn)); it reads GLPVCGETCVGGTCNTPGCSCSWPVCTRN. 3 cysteine pairs are disulfide-bonded: Cys179-Cys193, Cys183-Cys195, and Cys188-Cys200. A propeptide spanning residues 204–207 is cleaved from the precursor; sequence ALAM.

The protein belongs to the cyclotide family. Moebius subfamily. Post-translationally, varv peptide A and kalata-B1 are cyclic peptides.

Its function is as follows. Probably participates in a plant defense mechanism. Has hemolytic activity. This is Varv peptide A/Kalata-B1 from Viola odorata (Sweet violet).